A 459-amino-acid polypeptide reads, in one-letter code: Cysteine--tRNA ligase (459 aa).

Cys31 provides a ligand contact to Zn(2+). The short motif at 33 to 43 is the 'HIGH' region element; the sequence is PTVYYNPHIGN. Zn(2+) is bound by residues Cys216, His241, and Glu245. The 'KMSKS' region motif lies at 274-278; the sequence is KMSKS. Residue Lys277 coordinates ATP.

It belongs to the class-I aminoacyl-tRNA synthetase family. As to quaternary structure, monomer. Requires Zn(2+) as cofactor.

The protein resides in the cytoplasm. It carries out the reaction tRNA(Cys) + L-cysteine + ATP = L-cysteinyl-tRNA(Cys) + AMP + diphosphate. In Rickettsia peacockii (strain Rustic), this protein is Cysteine--tRNA ligase.